A 193-amino-acid chain; its full sequence is Probable nicotinate-nucleotide adenylyltransferase (193 aa).

Belongs to the NadD family.

The enzyme catalyses nicotinate beta-D-ribonucleotide + ATP + H(+) = deamido-NAD(+) + diphosphate. It participates in cofactor biosynthesis; NAD(+) biosynthesis; deamido-NAD(+) from nicotinate D-ribonucleotide: step 1/1. Its function is as follows. Catalyzes the reversible adenylation of nicotinate mononucleotide (NaMN) to nicotinic acid adenine dinucleotide (NaAD). The sequence is that of Probable nicotinate-nucleotide adenylyltransferase from Chlorobium phaeovibrioides (strain DSM 265 / 1930) (Prosthecochloris vibrioformis (strain DSM 265)).